The sequence spans 792 residues: Protein SEY1 homolog 2 (792 aa).

Residues 1-638 are Cytoplasmic-facing; it reads MEQIITGDGA…NIKAQANREQ (638 aa). The 218-residue stretch at 28 to 245 folds into the GB1/RHD3-type G domain; it reads GVDYHTVAII…LKDYLFAEKS (218 aa). A GTP-binding site is contributed by 38–45; it reads GPQSSGKS. Residues 639 to 659 traverse the membrane as a helical segment; sequence IPGWAWLATFLCSSNYIMKLL. Topologically, residues 660 to 662 are lumenal; it reads ANP. The helical transmembrane segment at 663-683 threads the bilayer; that stretch reads IFFALAVIIGGIYSILRMLGL. At 684–792 the chain is on the cytoplasmic side; the sequence is QDVAKKTLLD…LTRTQSLEFM (109 aa). Residues 691–718 adopt a coiled-coil conformation; sequence LLDKFNSLLKNLTKDENEQEKEGEENEE. The tract at residues 703–792 is disordered; sequence TKDENEQEKE…LTRTQSLEFM (90 aa). The span at 707-723 shows a compositional bias: acidic residues; the sequence is NEQEKEGEENEEPEEDQ. 2 stretches are compositionally biased toward polar residues: residues 739-751 and 764-774; these read SVSQ…SIYK and IPQTSPLGNND.

It belongs to the TRAFAC class dynamin-like GTPase superfamily. GB1/RHD3 GTPase family. RHD3 subfamily.

Its subcellular location is the endoplasmic reticulum membrane. Probable GTP-binding protein that may be involved in cell development. In Trichomonas vaginalis (strain ATCC PRA-98 / G3), this protein is Protein SEY1 homolog 2.